The primary structure comprises 245 residues: Phosphoadenosine 5'-phosphosulfate reductase (245 aa).

Cys-239 serves as the catalytic Nucleophile; cysteine thiosulfonate intermediate.

This sequence belongs to the PAPS reductase family. CysH subfamily.

Its subcellular location is the cytoplasm. The catalysed reaction is [thioredoxin]-disulfide + sulfite + adenosine 3',5'-bisphosphate + 2 H(+) = [thioredoxin]-dithiol + 3'-phosphoadenylyl sulfate. The protein operates within sulfur metabolism; hydrogen sulfide biosynthesis; sulfite from sulfate: step 3/3. In terms of biological role, catalyzes the formation of sulfite from phosphoadenosine 5'-phosphosulfate (PAPS) using thioredoxin as an electron donor. In Alkalilimnicola ehrlichii (strain ATCC BAA-1101 / DSM 17681 / MLHE-1), this protein is Phosphoadenosine 5'-phosphosulfate reductase.